The following is a 97-amino-acid chain: Serine protease inhibitor Kazal-type 13 (97 aa).

The N-terminal stretch at 1–26 (MKRSGCWHQRMLLSLVLLTWTHVTFS) is a signal peptide. A glycan (N-linked (GlcNAc...) asparagine) is linked at N33. One can recognise a Kazal-like domain in the interval 36 to 97 (RWPKPPCKMY…IQFVKYGKCE (62 aa)). 3 cysteine pairs are disulfide-bonded: C42-C78, C56-C75, and C64-C96.

It is found in the secreted. Its function is as follows. May be a serine protease inhibitor. Essential for sperm maturation and fertility. Inhibits sperm acrosome reaction, protecting sperm from premature reaction. The polypeptide is Serine protease inhibitor Kazal-type 13 (Spink13) (Mus musculus (Mouse)).